Reading from the N-terminus, the 754-residue chain is Anaphase-promoting complex subunit cdh1 (754 aa).

Residues 1–10 (MFHSEYEKKL) show a composition bias toward basic and acidic residues. Disordered stretches follow at residues 1–30 (MFHSEYEKKLRSPSKSPGSKTNYYNNYSNN), 47–116 (YEDN…TTTT), and 200–351 (IFNN…NNNN). 2 stretches are compositionally biased toward low complexity: residues 50 to 116 (NGSN…TTTT) and 202 to 325 (NNNN…ININ). Polar residues predominate over residues 326–339 (QSPSKKQSLMSATM). The span at 340–351 (NNNNSNNNNNNN) shows a compositional bias: low complexity. WD repeat units follow at residues 411 to 448 (KDDFYLNLIDWSSHNILAVGLDTSVYLWNATTSQVSKL), 452 to 492 (ESGQ…KIRE), 495 to 532 (GHNTRVNALAWNNHILSSGGKDKVILHHDVRDCSNNYT), and 537 to 576 (GHRHEICGLKWSPDGQQLASGGNDNLLNVWDHSMTQQPQQ). The disordered stretch occupies residues 570-598 (MTQQPQQQHQPPPPPPSSNTSSISQQQQQ). Low complexity predominate over residues 587–598 (SNTSSISQQQQQ). 3 WD repeats span residues 610–652 (FHYA…SIQS), 654–695 (DTGS…PVTT), and 698–737 (GHTMRVLYLAVSPDGQTVCTGAGDNSLRFWNLFPSNKESS).

Belongs to the WD repeat CDC20/Fizzy family. As to quaternary structure, the APC/C is composed of at least 13 subunits that stay tightly associated throughout the cell cycle: anapc1, anapc2, anapc3, anapc4, anapc5, anapc6, anapc7, anapc8, anapc10, anapc11, cdc20, cdc26 and cdh1.

The protein resides in the nucleus. It functions in the pathway protein modification; protein ubiquitination. In terms of biological role, component of the anaphase promoting complex/cyclosome (APC/C), a cell cycle-regulated E3 ubiquitin-protein ligase complex that controls progression through mitosis and the G1 phase of the cell cycle. The chain is Anaphase-promoting complex subunit cdh1 (cdh1) from Dictyostelium discoideum (Social amoeba).